A 461-amino-acid polypeptide reads, in one-letter code: Coronin-1A (461 aa).

Ser2 is subject to N-acetylserine. Ser2 is subject to Phosphoserine; by PKC. 7 WD repeats span residues 13-63, 73-110, 123-160, 164-204, 207-251, 258-296, and 302-349; these read HVFG…LVLP, NVPMVCGHTAPVLDIAWCPHNDNVIASGSEDCSVMVWE, PVVTLEGHTKRVGIVAWHPTAQNVLLSAGCDNVILVWD, GVAV…RIIE, KGTI…ALWD, PLSLQELDTSSGVLLPFFDPDTNIVYLCGKGDSSIRYFE, and PFLH…EPIA. Basic and acidic residues predominate over residues 404–418; sequence LRVNRGLDTGRKRTT. Positions 404–429 are disordered; it reads LRVNRGLDTGRKRTTPEASGAPSSDA. Thr412 bears the Phosphothreonine; by PKC mark. Phosphothreonine is present on Thr418. Ser422 bears the Phosphoserine mark. A coiled-coil region spans residues 424–460; the sequence is APSSDAISRLEEEMRKLQATVQELQKRLDRLEETVQA. Lys449 carries the N6-acetyllysine modification.

The protein belongs to the WD repeat coronin family. Binds actin. Post-translationally, phosphorylation at Thr-412 by PKC strongly down-regulates the association with actin. In terms of processing, polyubiquitinated by RNF128 with 'Lys-48'-linked chains, leading to proteasomal degradation. As to expression, expressed in brain, thymus, spleen, bone marrow and lymph node. Low in lung and gut.

It is found in the cytoplasm. It localises to the cytoskeleton. Its subcellular location is the cell cortex. The protein localises to the cytoplasmic vesicle. The protein resides in the phagosome membrane. May be a crucial component of the cytoskeleton of highly motile cells, functioning both in the invagination of large pieces of plasma membrane, as well as in forming protrusions of the plasma membrane involved in cell locomotion. In mycobacteria-infected macrophages, its retention on the phagosomal membrane prevents fusion between phagosomes and lysosomes. This Bos taurus (Bovine) protein is Coronin-1A (CORO1A).